The following is a 688-amino-acid chain: Putative proline--tRNA ligase YHR020W (688 aa).

S149 is subject to Phosphoserine. Residue T170 is modified to Phosphothreonine. The disordered stretch occupies residues 631-650 (ESSAKKDDGEEFEEDDKAPS). S655 carries the phosphoserine modification.

Belongs to the class-II aminoacyl-tRNA synthetase family.

It carries out the reaction tRNA(Pro) + L-proline + ATP = L-prolyl-tRNA(Pro) + AMP + diphosphate. This chain is Putative proline--tRNA ligase YHR020W, found in Saccharomyces cerevisiae (strain ATCC 204508 / S288c) (Baker's yeast).